A 248-amino-acid chain; its full sequence is Probable transcriptional regulatory protein Acid_5948 (248 aa).

It belongs to the TACO1 family.

It is found in the cytoplasm. The chain is Probable transcriptional regulatory protein Acid_5948 from Solibacter usitatus (strain Ellin6076).